We begin with the raw amino-acid sequence, 265 residues long: Small ribosomal subunit protein eS1 (265 aa).

Disordered stretches follow at residues 1–24 (MTQG…RTID) and 240–265 (HEKK…LLAQ). Over residues 240–253 (HEKKGEKATGRDGA) the composition is skewed to basic and acidic residues.

Belongs to the eukaryotic ribosomal protein eS1 family. As to quaternary structure, component of the small ribosomal subunit. Mature ribosomes consist of a small (40S) and a large (60S) subunit. The 40S subunit contains about 33 different proteins and 1 molecule of RNA (18S). The 60S subunit contains about 49 different proteins and 3 molecules of RNA (25S, 5.8S and 5S).

It localises to the cytoplasm. In Tetrahymena thermophila (strain SB210), this protein is Small ribosomal subunit protein eS1.